A 311-amino-acid polypeptide reads, in one-letter code: Reaction center protein L chain (311 aa).

Helical transmembrane passes span 68–90 (FWGF…ETIL), 123–151 (GFAW…SMKL), and 156–178 (HVPI…RPIA). (7R,8Z)-bacteriochlorophyll b-binding residues include H183 and H213. The helical transmembrane segment at 211 to 238 (PFHAIGITGLFASTWLLACHGSLILSAA) threads the bilayer. H230 is a Fe cation binding site. F253 provides a ligand contact to a ubiquinone. A helical transmembrane segment spans residues 262-287 (GESGVHRLGYIFAIGGILSADLCILL). H267 is a Fe cation binding site.

The protein belongs to the reaction center PufL/M/PsbA/D family. In terms of assembly, reaction center is composed of four bacteriochlorophylls, two bacteriopheophytins, two ubiquinones, one iron, and two highly hydrophobic polypeptide chains (designated L and M).

It localises to the cell membrane. Its function is as follows. The reaction center is a membrane-bound complex that mediates the initial photochemical event in the electron transfer process of photosynthesis. The protein is Reaction center protein L chain (pufL) of Chloroflexus aurantiacus (strain ATCC 29366 / DSM 635 / J-10-fl).